Here is a 237-residue protein sequence, read N- to C-terminus: B3 domain-containing protein At1g20600 (237 aa).

The tract at residues leucine 53–asparagine 79 is disordered. Basic and acidic residues predominate over residues lysine 64–glutamine 73. The segment at residues lysine 126 to lysine 230 is a DNA-binding region (TF-B3).

It is found in the nucleus. The chain is B3 domain-containing protein At1g20600 from Arabidopsis thaliana (Mouse-ear cress).